Reading from the N-terminus, the 352-residue chain is Biotin synthase (352 aa).

Residues 44–262 enclose the Radical SAM core domain; that stretch reads NRVQVSTLLS…LAVARILMPQ (219 aa). The [4Fe-4S] cluster site is built by cysteine 59, cysteine 63, and cysteine 66. Residues cysteine 103, cysteine 134, cysteine 194, and arginine 266 each contribute to the [2Fe-2S] cluster site.

The protein belongs to the radical SAM superfamily. Biotin synthase family. Homodimer. It depends on [4Fe-4S] cluster as a cofactor. [2Fe-2S] cluster is required as a cofactor.

The enzyme catalyses (4R,5S)-dethiobiotin + (sulfur carrier)-SH + 2 reduced [2Fe-2S]-[ferredoxin] + 2 S-adenosyl-L-methionine = (sulfur carrier)-H + biotin + 2 5'-deoxyadenosine + 2 L-methionine + 2 oxidized [2Fe-2S]-[ferredoxin]. It participates in cofactor biosynthesis; biotin biosynthesis; biotin from 7,8-diaminononanoate: step 2/2. In terms of biological role, catalyzes the conversion of dethiobiotin (DTB) to biotin by the insertion of a sulfur atom into dethiobiotin via a radical-based mechanism. This Pseudomonas syringae pv. tomato (strain ATCC BAA-871 / DC3000) protein is Biotin synthase.